A 135-amino-acid chain; its full sequence is Fluoride-specific ion channel FluC 2 (135 aa).

4 helical membrane-spanning segments follow: residues 5–25 (VLAAVAAGGALGALARAGLLA), 36–56 (WGTVLVNVLGCALIGVLMETL), 68–88 (PFLGVGVLGGFTTFSAAITDA), and 100–120 (ALLAIAANLIGALLAVSAAAG). Residues glycine 76 and threonine 79 each contribute to the Na(+) site.

This sequence belongs to the fluoride channel Fluc/FEX (TC 1.A.43) family.

It localises to the cell membrane. It carries out the reaction fluoride(in) = fluoride(out). Its activity is regulated as follows. Na(+) is not transported, but it plays an essential structural role and its presence is essential for fluoride channel function. In terms of biological role, fluoride-specific ion channel. Important for reducing fluoride concentration in the cell, thus reducing its toxicity. The polypeptide is Fluoride-specific ion channel FluC 2 (Thermobifida fusca (strain YX)).